The following is a 115-amino-acid chain: Aspartate 1-decarboxylase (115 aa).

Catalysis depends on serine 25, which acts as the Schiff-base intermediate with substrate; via pyruvic acid. Serine 25 bears the Pyruvic acid (Ser) mark. Threonine 57 is a binding site for substrate. Catalysis depends on tyrosine 58, which acts as the Proton donor. Glycine 71–alanine 73 contacts substrate.

This sequence belongs to the PanD family. As to quaternary structure, heterooctamer of four alpha and four beta subunits. It depends on pyruvate as a cofactor. Is synthesized initially as an inactive proenzyme, which is activated by self-cleavage at a specific serine bond to produce a beta-subunit with a hydroxyl group at its C-terminus and an alpha-subunit with a pyruvoyl group at its N-terminus.

It localises to the cytoplasm. The catalysed reaction is L-aspartate + H(+) = beta-alanine + CO2. Its pathway is cofactor biosynthesis; (R)-pantothenate biosynthesis; beta-alanine from L-aspartate: step 1/1. Catalyzes the pyruvoyl-dependent decarboxylation of aspartate to produce beta-alanine. The sequence is that of Aspartate 1-decarboxylase from Campylobacter concisus (strain 13826).